A 591-amino-acid polypeptide reads, in one-letter code: Probable sulfoacetaldehyde acetyltransferase (591 aa).

The segment at 359-383 is disordered; that stretch reads MDHEDDDPGTEWNVGARQREPDRMS.

Belongs to the TPP enzyme family. It depends on Mg(2+) as a cofactor. Thiamine diphosphate serves as cofactor.

Its subcellular location is the cytoplasm. It carries out the reaction acetyl phosphate + sulfite + H(+) = sulfoacetaldehyde + phosphate. It participates in organosulfur degradation; taurine degradation via aerobic pathway; acetyl phosphate and sulfite from taurine: step 2/2. The protein is Probable sulfoacetaldehyde acetyltransferase (xsc) of Rhizobium meliloti (strain 1021) (Ensifer meliloti).